Consider the following 286-residue polypeptide: Aminoglycoside N(3)-acetyltransferase VIII (286 aa).

This sequence belongs to the antibiotic N-acetyltransferase family.

It catalyses the reaction a 2-deoxystreptamine antibiotic + acetyl-CoA = an N(3)-acetyl-2-deoxystreptamine antibiotic + CoA + H(+). Resistance to neomycin. The protein is Aminoglycoside N(3)-acetyltransferase VIII (aacC8) of Streptomyces fradiae (Streptomyces roseoflavus).